The primary structure comprises 539 residues: Membrane protein insertase YidC (539 aa).

Residues Val-6–Pro-26 traverse the membrane as a helical segment. The interval Pro-28–Ser-63 is disordered. The span at Ala-32 to Ala-45 shows a compositional bias: low complexity. Positions Val-54–Ser-63 are enriched in polar residues. Transmembrane regions (helical) follow at residues Tyr-349–His-369, Met-421–Leu-441, and Ile-496–Val-516.

Belongs to the OXA1/ALB3/YidC family. Type 1 subfamily. As to quaternary structure, interacts with the Sec translocase complex via SecD. Specifically interacts with transmembrane segments of nascent integral membrane proteins during membrane integration.

Its subcellular location is the cell inner membrane. Required for the insertion and/or proper folding and/or complex formation of integral membrane proteins into the membrane. Involved in integration of membrane proteins that insert both dependently and independently of the Sec translocase complex, as well as at least some lipoproteins. Aids folding of multispanning membrane proteins. This chain is Membrane protein insertase YidC, found in Maridesulfovibrio salexigens (strain ATCC 14822 / DSM 2638 / NCIMB 8403 / VKM B-1763) (Desulfovibrio salexigens).